A 694-amino-acid polypeptide reads, in one-letter code: Ubiquitin-like modifier-activating enzyme ATG7 (694 aa).

The short motif at 370–375 (GAGTLG) is the GXGXXG motif element. The active-site Glycyl thioester intermediate is the cysteine 550. The segment at 650–689 (ALQEKEYVAELSGLAEVQRRAEEMAAHVDWEEDDDLVDDG) is homodimerization.

It belongs to the ATG7 family. Homodimer. Interacts with ATG8 through a thioester bond between Cys-550 and the C-terminal 'Gly-116' of ATG8 and with ATG12 through a thioester bond between Cys-550 and the C-terminal 'Gly-160' of ATG12. Also interacts with ATG3.

It localises to the cytoplasm. The protein localises to the preautophagosomal structure. E1-like activating enzyme involved in the 2 ubiquitin-like systems required for cytoplasm to vacuole transport (Cvt) and autophagy. Activates ATG12 for its conjugation with ATG5 and ATG8 for its conjugation with phosphatidylethanolamine. Both systems are needed for the ATG8 association to Cvt vesicles and autophagosomes membranes. Autophagy is essential for maintenance of amino acid levels and protein synthesis under nitrogen starvation. Required for selective autophagic degradation of the nucleus (nucleophagy) as well as for mitophagy which contributes to regulate mitochondrial quantity and quality by eliminating the mitochondria to a basal level to fulfill cellular energy requirements and preventing excess ROS production. Autophagy is required for proper vegetative growth, asexual/sexual reproduction, and full virulence. Autophagy is particularly involved in the biosynthesis of deoxynivalenol (DON), an important virulence determinant. This chain is Ubiquitin-like modifier-activating enzyme ATG7, found in Gibberella zeae (strain ATCC MYA-4620 / CBS 123657 / FGSC 9075 / NRRL 31084 / PH-1) (Wheat head blight fungus).